A 299-amino-acid chain; its full sequence is Apolipoprotein E (299 aa).

The N-terminal stretch at 1-18 is a signal peptide; the sequence is MKALWAVLVVTLLAGCRA. Repeat copies occupy residues 74-95, 96-117, 118-139, 140-161, 162-183, 184-205, 206-223, and 224-245. Residues 74–245 are 8 X 22 AA approximate tandem repeats; the sequence is VLMEDTMKEV…RLDEVREQME (172 aa). Positions 152 to 162 are LDL and other lipoprotein receptors binding; sequence HLRKLRKRLLR. A heparin-binding site is contributed by 156 to 159; it reads LRKR. Positions 204-273 are lipid-binding and lipoprotein association; that stretch reads AALTGQPLRE…GWFEPMMEDM (70 aa). 219-226 contacts heparin; that stretch reads GERLRGRL. The specificity for association with VLDL stretch occupies residues 261 to 273; the sequence is RLKGWFEPMMEDM.

The protein belongs to the apolipoprotein A1/A4/E family. In terms of assembly, homotetramer. May interact with ABCA1; functionally associated with ABCA1 in the biogenesis of HDLs. May interact with APP/A4 amyloid-beta peptide; the interaction is extremely stable in vitro but its physiological significance is unclear. May interact with MAPT. May interact with MAP2. In the cerebrospinal fluid, interacts with secreted SORL1. Interacts with PMEL; this allows the loading of PMEL luminal fragment on ILVs to induce fibril nucleation. In terms of processing, APOE exists as multiple glycosylated and sialylated glycoforms within cells and in plasma. The extent of glycosylation and sialylation are tissue and context specific. Post-translationally, glycated in plasma VLDL. Phosphorylated by FAM20C in the extracellular medium.

The protein localises to the secreted. Its subcellular location is the extracellular space. The protein resides in the extracellular matrix. It localises to the extracellular vesicle. It is found in the endosome. The protein localises to the multivesicular body. Its function is as follows. APOE is an apolipoprotein, a protein associating with lipid particles, that mainly functions in lipoprotein-mediated lipid transport between organs via the plasma and interstitial fluids. APOE is a core component of plasma lipoproteins and is involved in their production, conversion and clearance. Apolipoproteins are amphipathic molecules that interact both with lipids of the lipoprotein particle core and the aqueous environment of the plasma. As such, APOE associates with chylomicrons, chylomicron remnants, very low density lipoproteins (VLDL) and intermediate density lipoproteins (IDL) but shows a preferential binding to high-density lipoproteins (HDL). It also binds a wide range of cellular receptors including the LDL receptor/LDLR and the very low-density lipoprotein receptor/VLDLR that mediate the cellular uptake of the APOE-containing lipoprotein particles. Finally, APOE also has a heparin-binding activity and binds heparan-sulfate proteoglycans on the surface of cells, a property that supports the capture and the receptor-mediated uptake of APOE-containing lipoproteins by cells. This Heterocephalus glaber (Naked mole rat) protein is Apolipoprotein E (APOE).